Here is a 142-residue protein sequence, read N- to C-terminus: Succinate dehydrogenase subunit 6, mitochondrial (142 aa).

Component of complex II composed of eight subunits in plants: four classical SDH subunits SDH1, SDH2, SDH3 and SDH4 (a flavoprotein (FP), an iron-sulfur protein (IP), and a cytochrome b composed of a large and a small subunit.), as well as four subunits unknown in mitochondria from bacteria and heterotrophic eukaryotes.

The protein localises to the mitochondrion inner membrane. It participates in carbohydrate metabolism; tricarboxylic acid cycle. This chain is Succinate dehydrogenase subunit 6, mitochondrial, found in Oryza sativa subsp. japonica (Rice).